Consider the following 320-residue polypeptide: MNWTAIVVETSTEAVDAVSYILTDTGATGVKIDDAADYQKLKPGKYGPYGEIVDPSTLPHREEGAAVTGYYPPTTFVPEKIADIRQRVAKLADFGLNPAPARVAAEEIDNQDWATAWQKYYHPVRVTRELTIVPQWEEYTPATADEKLLVLDPGMAFGTGTHPTTQLMLQALTIALRGGESMIDVGTGSGVLSIAAKQLGAGEVWAYDIDDVAVKSAKKNLALNPIAKDVHTGVNSLLDGIHTQVDLVVANILAEIILPLVPQAFENLKPGGKFLTSGIINTKFETVKKAIEAQGFVVDETMRIKDWYGIIAHKPAPEEA.

Positions 165, 186, 208, and 251 each coordinate S-adenosyl-L-methionine.

It belongs to the methyltransferase superfamily. PrmA family.

It is found in the cytoplasm. The enzyme catalyses L-lysyl-[protein] + 3 S-adenosyl-L-methionine = N(6),N(6),N(6)-trimethyl-L-lysyl-[protein] + 3 S-adenosyl-L-homocysteine + 3 H(+). Methylates ribosomal protein L11. The chain is Ribosomal protein L11 methyltransferase from Limosilactobacillus fermentum (strain NBRC 3956 / LMG 18251) (Lactobacillus fermentum).